A 630-amino-acid polypeptide reads, in one-letter code: Ribonucleoside-diphosphate reductase large subunit (630 aa).

Residues serine 67, alanine 82–cysteine 83, glycine 111, asparagine 317–glutamate 321, and proline 459–serine 463 each bind substrate. A disulfide bond links cysteine 83 and cysteine 334. Asparagine 317 serves as the catalytic Proton acceptor. Catalysis depends on cysteine 319, which acts as the Cysteine radical intermediate. Glutamate 321 functions as the Proton acceptor in the catalytic mechanism.

It belongs to the ribonucleoside diphosphate reductase large chain family. Heterotetramer composed of a homodimer of the large subunit (R1) and a homodimer of the small subunit (R2). Larger multisubunit protein complex are also active, composed of (R1)n(R2)n.

It catalyses the reaction a 2'-deoxyribonucleoside 5'-diphosphate + [thioredoxin]-disulfide + H2O = a ribonucleoside 5'-diphosphate + [thioredoxin]-dithiol. Its activity is regulated as follows. Under complex allosteric control mediated by deoxynucleoside triphosphates and ATP binding. The type of nucleotide bound at the specificity site determines substrate preference. It seems probable that ATP makes the enzyme reduce CDP and UDP, dGTP favors ADP reduction and dTTP favors GDP reduction. Functionally, ribonucleoside-diphosphate reductase holoenzyme provides the precursors necessary for viral DNA synthesis. Allows virus growth in non-dividing cells. Catalyzes the biosynthesis of deoxyribonucleotides from the corresponding ribonucleotides. The protein is Ribonucleoside-diphosphate reductase large subunit of Aedes vexans (Inland floodwater mosquito).